Here is a 416-residue protein sequence, read N- to C-terminus: Glyceraldehyde-3-phosphate dehydrogenase, chloroplastic (416 aa).

The N-terminal 78 residues, Met-1 to Ser-78, are a transit peptide targeting the chloroplast. NADP(+) is bound by residues Arg-90–Ile-91, Asp-114, and Arg-158. D-glyceraldehyde 3-phosphate is bound by residues Ser-232 to Thr-234, Thr-263, Arg-278, Thr-291 to Gly-292, and Arg-314. The Nucleophile role is filled by Cys-233. Asn-396 serves as a coordination point for NADP(+).

Belongs to the glyceraldehyde-3-phosphate dehydrogenase family. Homotetramer.

It localises to the plastid. It is found in the chloroplast. The enzyme catalyses D-glyceraldehyde 3-phosphate + phosphate + NADP(+) = (2R)-3-phospho-glyceroyl phosphate + NADPH + H(+). It participates in carbohydrate biosynthesis; Calvin cycle. This chain is Glyceraldehyde-3-phosphate dehydrogenase, chloroplastic (GAPA), found in Gracilaria gracilis (Red alga).